The chain runs to 61 residues: Large ribosomal subunit protein uL30 (61 aa).

This sequence belongs to the universal ribosomal protein uL30 family. Part of the 50S ribosomal subunit.

The sequence is that of Large ribosomal subunit protein uL30 from Corynebacterium urealyticum (strain ATCC 43042 / DSM 7109).